The primary structure comprises 172 residues: Stellate orphon protein at 12D (172 aa).

This sequence belongs to the casein kinase 2 subunit beta family. As to quaternary structure, interacts in vitro with the casein kinase 2 alpha subunit (CkII-alpha). The relevance of such interaction is however unclear in vivo. As to expression, probably not expressed in wild-type flies. In males lacking the Y chromosome, it is testis-specific and constitutes the main component of star-shaped crystals.

Functionally, unknown. In males lacking the Y chromosome, its strong overexpression leads to the appearance of proteinaceous star-shaped crystals in the primary spermatocytes causing meiotic drive, possibly by interfering with normal casein kinase 2 activity. The chain is Stellate orphon protein at 12D (Ste12DOR) from Drosophila melanogaster (Fruit fly).